The primary structure comprises 213 residues: Ribosomal RNA large subunit methyltransferase E (213 aa).

S-adenosyl-L-methionine-binding residues include G59, F61, D79, D97, and D121. K161 (proton acceptor) is an active-site residue.

This sequence belongs to the class I-like SAM-binding methyltransferase superfamily. RNA methyltransferase RlmE family.

The protein localises to the cytoplasm. It catalyses the reaction uridine(2552) in 23S rRNA + S-adenosyl-L-methionine = 2'-O-methyluridine(2552) in 23S rRNA + S-adenosyl-L-homocysteine + H(+). Functionally, specifically methylates the uridine in position 2552 of 23S rRNA at the 2'-O position of the ribose in the fully assembled 50S ribosomal subunit. This chain is Ribosomal RNA large subunit methyltransferase E, found in Myxococcus xanthus (strain DK1622).